A 485-amino-acid chain; its full sequence is E3 ubiquitin-protein ligase TRIM68 (485 aa).

The RING-type zinc-finger motif lies at 16-61 (CPICMTFLREPMSIDCGHSFCHSCLSGLWEIPGESQNWGYTCPLCR). The B box-type zinc finger occupies 93–134 (LKGDLCERHGEKLKMFCKEDVLIMCEACSQSPEHEAHSVVPM). Zn(2+)-binding residues include C98, H101, C120, and H126. A coiled-coil region spans residues 207–239 (AEVAAALASLQREAAETMQKLELNHSELIQQSQ). The B30.2/SPRY domain maps to 285-481 (LKTDCRVLGL…NTAPLAICSL (197 aa)).

This sequence belongs to the TRIM/RBCC family. Interacts with AR/androgen receptor (via ligand-binding domain). Interacts with KAT5/TIP60. In terms of processing, auto-ubiquitinated. As to expression, widely expressed. Expressed at high levels in prostate cancer cell lines. Up-regulation could be restricted to androgen-dependent cells.

Its subcellular location is the cytoplasm. The protein resides in the perinuclear region. It is found in the nucleus. It carries out the reaction S-ubiquitinyl-[E2 ubiquitin-conjugating enzyme]-L-cysteine + [acceptor protein]-L-lysine = [E2 ubiquitin-conjugating enzyme]-L-cysteine + N(6)-ubiquitinyl-[acceptor protein]-L-lysine.. It functions in the pathway protein modification; protein ubiquitination. Functions as a ubiquitin E3 ligase. Acts as a coactivator of androgen receptor (AR) depending on its ubiquitin ligase activity. The chain is E3 ubiquitin-protein ligase TRIM68 (TRIM68) from Homo sapiens (Human).